A 163-amino-acid polypeptide reads, in one-letter code: Protein-export protein SecB (163 aa).

The protein belongs to the SecB family. Homotetramer, a dimer of dimers. One homotetramer interacts with 1 SecA dimer.

The protein localises to the cytoplasm. Its function is as follows. One of the proteins required for the normal export of preproteins out of the cell cytoplasm. It is a molecular chaperone that binds to a subset of precursor proteins, maintaining them in a translocation-competent state. It also specifically binds to its receptor SecA. The sequence is that of Protein-export protein SecB from Pseudomonas aeruginosa (strain LESB58).